We begin with the raw amino-acid sequence, 434 residues long: Putative MgpC-like protein MPN_149 (434 aa).

2 disordered regions span residues G168–V193 and E215–G267. The segment covering G170–L184 has biased composition (polar residues). Residues D218–S229 show a composition bias toward basic and acidic residues. Residues S248–G267 are compositionally biased toward polar residues.

It belongs to the MgpC family.

This chain is Putative MgpC-like protein MPN_149, found in Mycoplasma pneumoniae (strain ATCC 29342 / M129 / Subtype 1) (Mycoplasmoides pneumoniae).